The chain runs to 137 residues: Nucleoside diphosphate kinase (137 aa).

ATP-binding residues include Lys9, Phe57, Arg85, Thr91, Arg102, and Asn112. His115 functions as the Pros-phosphohistidine intermediate in the catalytic mechanism.

This sequence belongs to the NDK family. As to quaternary structure, homotetramer. Mg(2+) serves as cofactor.

Its subcellular location is the cytoplasm. It carries out the reaction a 2'-deoxyribonucleoside 5'-diphosphate + ATP = a 2'-deoxyribonucleoside 5'-triphosphate + ADP. The enzyme catalyses a ribonucleoside 5'-diphosphate + ATP = a ribonucleoside 5'-triphosphate + ADP. Its function is as follows. Major role in the synthesis of nucleoside triphosphates other than ATP. The ATP gamma phosphate is transferred to the NDP beta phosphate via a ping-pong mechanism, using a phosphorylated active-site intermediate. The sequence is that of Nucleoside diphosphate kinase from Geobacter sp. (strain M21).